A 632-amino-acid chain; its full sequence is Sporulenol synthase (632 aa).

The active-site Proton donor is aspartate 377. PFTB repeat units follow at residues 395–436 (WERG…EDAA), 465–505 (IQRA…HACG), and 513–554 (IQKA…VQTA).

Belongs to the terpene cyclase/mutase family.

It is found in the cell membrane. It catalyses the reaction sporulenol = (R)-tetraprenyl-beta-curcumene + H2O. It participates in secondary metabolite biosynthesis; hopanoid biosynthesis. Catalyzes the cyclization of tetraprenyl beta-curcumene into sporulenol. The sequence is that of Sporulenol synthase (sqhC) from Bacillus subtilis (strain 168).